A 623-amino-acid chain; its full sequence is tRNA 5-methylaminomethyl-2-thiouridine biosynthesis bifunctional protein MnmC (623 aa).

The interval 1-244 is tRNA (mnm(5)s(2)U34)-methyltransferase; that stretch reads MCVSSSIQTA…KREMLKAIWP (244 aa). The FAD-dependent cmnm(5)s(2)U34 oxidoreductase stretch occupies residues 268–623; the sequence is IGAGIAGLHC…VKIKKPYYSS (356 aa).

In the N-terminal section; belongs to the methyltransferase superfamily. tRNA (mnm(5)s(2)U34)-methyltransferase family. This sequence in the C-terminal section; belongs to the DAO family. FAD serves as cofactor.

The protein resides in the cytoplasm. The enzyme catalyses 5-aminomethyl-2-thiouridine(34) in tRNA + S-adenosyl-L-methionine = 5-methylaminomethyl-2-thiouridine(34) in tRNA + S-adenosyl-L-homocysteine + H(+). In terms of biological role, catalyzes the last two steps in the biosynthesis of 5-methylaminomethyl-2-thiouridine (mnm(5)s(2)U) at the wobble position (U34) in tRNA. Catalyzes the FAD-dependent demodification of cmnm(5)s(2)U34 to nm(5)s(2)U34, followed by the transfer of a methyl group from S-adenosyl-L-methionine to nm(5)s(2)U34, to form mnm(5)s(2)U34. This Acinetobacter baylyi (strain ATCC 33305 / BD413 / ADP1) protein is tRNA 5-methylaminomethyl-2-thiouridine biosynthesis bifunctional protein MnmC.